The sequence spans 574 residues: MRTLLTILTVGSLAAHAPEDPSDLLQHVKFQSSNFENILTWDSGPEGTPDTVYSIEYKTYGERDWVAKKGCQRITRKSCNLTVETGNLTELYYARVTAVSAGGRSATKMTDRFSSLQHTTLKPPDVTCISKVRSIQMIVHPTPTPIRAGDGHRLTLEDIFHDLFYHLELQVNRTYQMHLGGKQREYEFFGLTPDTEFLGTIMICVPTWAKESAPYMCRVKTLPDRTWTYSFSGAFLFSMGFLVAVLCYLSYRYVTKPPAPPNSLNVQRVLTFQPLRFIQEHVLIPVFDLSGPSSLAQPVQYSQIRVSGPREPAGAPQRHSLSEITYLGQPDISILQPSNVPPPQILSPLSYAPNAAPEVGPPSYAPQVTPEAQFPFYAPQAISKVQPSSYAPQATPDSWPPSYGVCMEGSGKDSPTGTLSSPKHLRPKGQLQKEPPAGSCMLGGLSLQEVTSLAMEESQEAKSLHQPLGICTDRTSDPNVLHSGEEGTPQYLKGQLPLLSSVQIEGHPMSLPLQPPSRPCSPSDQGPSPWGLLESLVCPKDEAKSPAPETSDLEQPTELDSLFRGLALTVQWES.

An N-terminal signal peptide occupies residues 1–15 (MRTLLTILTVGSLAA). Residues 16-228 (HAPEDPSDLL…VKTLPDRTWT (213 aa)) are Extracellular-facing. 2 Fibronectin type-III domains span residues 17–124 (APED…LKPP) and 141–221 (PTPT…RVKT). C71 and C79 form a disulfide bridge. N-linked (GlcNAc...) asparagine glycans are attached at residues N80 and N172. C128 and C217 are joined by a disulfide. Residues 229–249 (YSFSGAFLFSMGFLVAVLCYL) traverse the membrane as a helical segment. At 250 to 574 (SYRYVTKPPA…GLALTVQWES (325 aa)) the chain is on the cytoplasmic side. Disordered stretches follow at residues 388–440 (SSYA…AGSC), 454–489 (AMEESQEAKSLHQPLGICTDRTSDPNVLHSGEEGTP), and 507–560 (HPMS…TELD). S410 and S414 each carry phosphoserine.

The protein belongs to the type II cytokine receptor family. Heterodimer with IL10RB and with IL20RB. IL22 binding to heterodimer is greater than binding to IL22RA1 alone. Interacts with FBXW12; the interaction promotes ubiquitination of IL22RA1. Post-translationally, ubiquitinated. As to expression, expressed in colon, liver, lung, pancreas and kidney. No expression in immune cells such as monocytes, T-cells, and NK-cells. Expressed in keratinocytes of normal skin as well as in psoriatic skin lesion. Detected in normal blood brain barrier endothelial cells as well as in multiple sclerosis lesions; Strongly expressed on central nervous system vessels within infiltrated multiple sclerosis lesions. Overexpressed in synovial fluid cells from rheumatoid arthritis and spondyloarthropathy patients.

It is found in the cell membrane. Functionally, component of the receptor for IL20, IL22 and IL24. Component of IL22 receptor formed by IL22RA1 and IL10RB enabling IL22 signaling via JAK/STAT pathways. IL22 also induces activation of MAPK1/MAPK3 and Akt kinases pathways. Component of one of the receptor for IL20 and IL24 formed by IL22RA1 and IL20RB also signaling through STATs activation. Mediates IL24 antiangiogenic activity as well as IL24 inhibitory effect on endothelial cell tube formation and differentiation. In Homo sapiens (Human), this protein is Interleukin-22 receptor subunit alpha-1 (IL22RA1).